Consider the following 562-residue polypeptide: Dihydroxy-acid dehydratase 1 (562 aa).

Residue Asp-80 participates in Mg(2+) binding. Cys-121 is a [2Fe-2S] cluster binding site. Mg(2+)-binding residues include Asp-122 and Lys-123. Lys-123 is modified (N6-carboxylysine). Cys-194 contacts [2Fe-2S] cluster. Residue Glu-446 coordinates Mg(2+). Residue Ser-472 is the Proton acceptor of the active site.

This sequence belongs to the IlvD/Edd family. Homodimer. Requires [2Fe-2S] cluster as cofactor. Mg(2+) is required as a cofactor.

The catalysed reaction is (2R)-2,3-dihydroxy-3-methylbutanoate = 3-methyl-2-oxobutanoate + H2O. The enzyme catalyses (2R,3R)-2,3-dihydroxy-3-methylpentanoate = (S)-3-methyl-2-oxopentanoate + H2O. It functions in the pathway amino-acid biosynthesis; L-isoleucine biosynthesis; L-isoleucine from 2-oxobutanoate: step 3/4. The protein operates within amino-acid biosynthesis; L-valine biosynthesis; L-valine from pyruvate: step 3/4. Functionally, functions in the biosynthesis of branched-chain amino acids. Catalyzes the dehydration of (2R,3R)-2,3-dihydroxy-3-methylpentanoate (2,3-dihydroxy-3-methylvalerate) into 2-oxo-3-methylpentanoate (2-oxo-3-methylvalerate) and of (2R)-2,3-dihydroxy-3-methylbutanoate (2,3-dihydroxyisovalerate) into 2-oxo-3-methylbutanoate (2-oxoisovalerate), the penultimate precursor to L-isoleucine and L-valine, respectively. The sequence is that of Dihydroxy-acid dehydratase 1 from Staphylococcus saprophyticus subsp. saprophyticus (strain ATCC 15305 / DSM 20229 / NCIMB 8711 / NCTC 7292 / S-41).